A 224-amino-acid chain; its full sequence is Deoxyribose-phosphate aldolase (224 aa).

Catalysis depends on Asp92, which acts as the Proton donor/acceptor. Catalysis depends on Lys155, which acts as the Schiff-base intermediate with acetaldehyde. Lys184 acts as the Proton donor/acceptor in catalysis.

This sequence belongs to the DeoC/FbaB aldolase family. DeoC type 1 subfamily.

It is found in the cytoplasm. It catalyses the reaction 2-deoxy-D-ribose 5-phosphate = D-glyceraldehyde 3-phosphate + acetaldehyde. Its pathway is carbohydrate degradation; 2-deoxy-D-ribose 1-phosphate degradation; D-glyceraldehyde 3-phosphate and acetaldehyde from 2-deoxy-alpha-D-ribose 1-phosphate: step 2/2. In terms of biological role, catalyzes a reversible aldol reaction between acetaldehyde and D-glyceraldehyde 3-phosphate to generate 2-deoxy-D-ribose 5-phosphate. The protein is Deoxyribose-phosphate aldolase of Shouchella clausii (strain KSM-K16) (Alkalihalobacillus clausii).